The primary structure comprises 670 residues: DNA mismatch repair protein MutL (670 aa).

The interval 363–451 (SFDRGRPLSR…RAAGGPASTH (89 aa)) is disordered. Residues 379–389 (ERWRERHRPDA) show a composition bias toward basic and acidic residues.

Belongs to the DNA mismatch repair MutL/HexB family.

In terms of biological role, this protein is involved in the repair of mismatches in DNA. It is required for dam-dependent methyl-directed DNA mismatch repair. May act as a 'molecular matchmaker', a protein that promotes the formation of a stable complex between two or more DNA-binding proteins in an ATP-dependent manner without itself being part of a final effector complex. The sequence is that of DNA mismatch repair protein MutL from Syntrophobacter fumaroxidans (strain DSM 10017 / MPOB).